A 280-amino-acid polypeptide reads, in one-letter code: Eukaryotic translation initiation factor 3 subunit F-1 (280 aa).

An MPN domain is found at 8 to 138 (VRVHPVVLFQ…LRAYVCIQLG (131 aa)).

This sequence belongs to the eIF-3 subunit F family. In terms of assembly, component of the eukaryotic translation initiation factor 3 (eIF-3) complex. The eIF-3 complex interacts with pix.

Its subcellular location is the cytoplasm. In terms of biological role, component of the eukaryotic translation initiation factor 3 (eIF-3) complex, which is involved in protein synthesis of a specialized repertoire of mRNAs and, together with other initiation factors, stimulates binding of mRNA and methionyl-tRNAi to the 40S ribosome. The eIF-3 complex specifically targets and initiates translation of a subset of mRNAs involved in cell proliferation. This chain is Eukaryotic translation initiation factor 3 subunit F-1, found in Drosophila erecta (Fruit fly).